Reading from the N-terminus, the 515-residue chain is Cytochrome P450 705A22 (515 aa).

The chain crosses the membrane as a helical span at residues 9–29; the sequence is FQNCFIFILIFLLTFLCFFFF. Residue Cys454 coordinates heme.

The protein belongs to the cytochrome P450 family. Heme serves as cofactor.

Its subcellular location is the membrane. Its function is as follows. Plays a role in the gravitropic response of the inflorescence stems and roots. May affect the synthesis of flavonols that have a role in regulating auxin transport. The sequence is that of Cytochrome P450 705A22 from Arabidopsis thaliana (Mouse-ear cress).